Reading from the N-terminus, the 516-residue chain is Thioredoxin reductase 2, mitochondrial (516 aa).

62-79 contributes to the FAD binding site; the sequence is DYVKPTPVGTKWGIGGTC. Cys-79 and Cys-84 form a disulfide bridge. The active-site Proton acceptor is the His-489.

Belongs to the class-I pyridine nucleotide-disulfide oxidoreductase family. As to quaternary structure, homodimer. FAD is required as a cofactor.

Its subcellular location is the mitochondrion. The catalysed reaction is [thioredoxin]-dithiol + NADP(+) = [thioredoxin]-disulfide + NADPH + H(+). Thioredoxin system is a major player in glutathione metabolism, due to the demonstrated absence of a glutathione reductase. Functionally interacts with the Sod/Cat reactive oxidation species (ROS) defense system and thereby has a role in preadult development and life span. Lack of a glutathione reductase suggests antioxidant defense in Drosophila, and probably in related insects, differs fundamentally from that in other organisms. The protein is Thioredoxin reductase 2, mitochondrial of Drosophila melanogaster (Fruit fly).